The primary structure comprises 185 residues: ATP-dependent protease subunit HslV (185 aa).

T12 is an active-site residue. A168, C171, and T174 together coordinate Na(+).

It belongs to the peptidase T1B family. HslV subfamily. A double ring-shaped homohexamer of HslV is capped on each side by a ring-shaped HslU homohexamer. The assembly of the HslU/HslV complex is dependent on binding of ATP.

The protein localises to the cytoplasm. It catalyses the reaction ATP-dependent cleavage of peptide bonds with broad specificity.. Its activity is regulated as follows. Allosterically activated by HslU binding. Functionally, protease subunit of a proteasome-like degradation complex believed to be a general protein degrading machinery. The protein is ATP-dependent protease subunit HslV of Cereibacter sphaeroides (strain KD131 / KCTC 12085) (Rhodobacter sphaeroides).